Reading from the N-terminus, the 510-residue chain is NAD(P)H-quinone oxidoreductase subunit 2 B, chloroplastic (510 aa).

A run of 13 helical transmembrane segments spans residues 24-44 (LLLF…GLIL), 57-77 (ISWF…VLLF), 99-119 (IFQF…VEYI), 124-144 (MAIT…MFLC), 149-169 (LITI…LSGY), 183-203 (YLLM…WLYG), 227-247 (PGIS…LSLA), 295-315 (WHLL…LIAI), 323-343 (MLAY…IVGD), 354-374 (YMLF…SFGL), 395-415 (ALSL…AGFF), 418-438 (LYLF…IGLL), and 482-502 (LSMI…NPII).

Belongs to the complex I subunit 2 family. As to quaternary structure, NDH is composed of at least 16 different subunits, 5 of which are encoded in the nucleus.

Its subcellular location is the plastid. It is found in the chloroplast thylakoid membrane. The enzyme catalyses a plastoquinone + NADH + (n+1) H(+)(in) = a plastoquinol + NAD(+) + n H(+)(out). It catalyses the reaction a plastoquinone + NADPH + (n+1) H(+)(in) = a plastoquinol + NADP(+) + n H(+)(out). NDH shuttles electrons from NAD(P)H:plastoquinone, via FMN and iron-sulfur (Fe-S) centers, to quinones in the photosynthetic chain and possibly in a chloroplast respiratory chain. The immediate electron acceptor for the enzyme in this species is believed to be plastoquinone. Couples the redox reaction to proton translocation, and thus conserves the redox energy in a proton gradient. The protein is NAD(P)H-quinone oxidoreductase subunit 2 B, chloroplastic of Lotus japonicus (Lotus corniculatus var. japonicus).